The following is a 276-amino-acid chain: Orotidine 5'-phosphate decarboxylase (276 aa).

The active-site Proton donor is the K96.

Belongs to the OMP decarboxylase family. Type 2 subfamily.

The enzyme catalyses orotidine 5'-phosphate + H(+) = UMP + CO2. Its pathway is pyrimidine metabolism; UMP biosynthesis via de novo pathway; UMP from orotate: step 2/2. The chain is Orotidine 5'-phosphate decarboxylase from Porphyromonas gingivalis (strain ATCC BAA-308 / W83).